Reading from the N-terminus, the 251-residue chain is uncharacterized protein (251 aa).

It belongs to the PaiB family.

This is an uncharacterized protein from Emericella nidulans (strain FGSC A4 / ATCC 38163 / CBS 112.46 / NRRL 194 / M139) (Aspergillus nidulans).